Reading from the N-terminus, the 104-residue chain is Phosphoribosyl-ATP pyrophosphatase (104 aa).

It belongs to the PRA-PH family.

It localises to the cytoplasm. The enzyme catalyses 1-(5-phospho-beta-D-ribosyl)-ATP + H2O = 1-(5-phospho-beta-D-ribosyl)-5'-AMP + diphosphate + H(+). The protein operates within amino-acid biosynthesis; L-histidine biosynthesis; L-histidine from 5-phospho-alpha-D-ribose 1-diphosphate: step 2/9. This chain is Phosphoribosyl-ATP pyrophosphatase (hisE), found in Methanosarcina acetivorans (strain ATCC 35395 / DSM 2834 / JCM 12185 / C2A).